A 322-amino-acid polypeptide reads, in one-letter code: tRNA-dihydrouridine synthase B (322 aa).

Residues 16-18 (PMA) and Gln70 contribute to the FMN site. The Proton donor role is filled by Cys100. FMN-binding positions include Lys139, 200-202 (NGD), and 224-225 (GR).

Belongs to the Dus family. DusB subfamily. The cofactor is FMN.

The enzyme catalyses a 5,6-dihydrouridine in tRNA + NAD(+) = a uridine in tRNA + NADH + H(+). It catalyses the reaction a 5,6-dihydrouridine in tRNA + NADP(+) = a uridine in tRNA + NADPH + H(+). Catalyzes the synthesis of 5,6-dihydrouridine (D), a modified base found in the D-loop of most tRNAs, via the reduction of the C5-C6 double bond in target uridines. The protein is tRNA-dihydrouridine synthase B of Shewanella oneidensis (strain ATCC 700550 / JCM 31522 / CIP 106686 / LMG 19005 / NCIMB 14063 / MR-1).